A 131-amino-acid chain; its full sequence is D-ribose pyranase (131 aa).

H20 acts as the Proton donor in catalysis. Substrate contacts are provided by residues D28, H98, and 120–122; that span reads YSN.

The protein belongs to the RbsD / FucU family. RbsD subfamily. As to quaternary structure, homodecamer.

It localises to the cytoplasm. It carries out the reaction beta-D-ribopyranose = beta-D-ribofuranose. It participates in carbohydrate metabolism; D-ribose degradation; D-ribose 5-phosphate from beta-D-ribopyranose: step 1/2. Catalyzes the interconversion of beta-pyran and beta-furan forms of D-ribose. The protein is D-ribose pyranase of Latilactobacillus sakei subsp. sakei (strain 23K) (Lactobacillus sakei subsp. sakei).